The chain runs to 296 residues: uncharacterized protein (296 aa).

The signal sequence occupies residues 1-20 (MRKFIFVLLTLLLVSPFSFA).

This is an uncharacterized protein from Escherichia coli (strain K12).